A 175-amino-acid chain; its full sequence is NAD(P)H-quinone oxidoreductase subunit J (175 aa).

Belongs to the complex I 30 kDa subunit family. In terms of assembly, NDH-1 can be composed of about 15 different subunits; different subcomplexes with different compositions have been identified which probably have different functions.

Its subcellular location is the cellular thylakoid membrane. The enzyme catalyses a plastoquinone + NADH + (n+1) H(+)(in) = a plastoquinol + NAD(+) + n H(+)(out). It catalyses the reaction a plastoquinone + NADPH + (n+1) H(+)(in) = a plastoquinol + NADP(+) + n H(+)(out). Functionally, NDH-1 shuttles electrons from an unknown electron donor, via FMN and iron-sulfur (Fe-S) centers, to quinones in the respiratory and/or the photosynthetic chain. The immediate electron acceptor for the enzyme in this species is believed to be plastoquinone. Couples the redox reaction to proton translocation, and thus conserves the redox energy in a proton gradient. Cyanobacterial NDH-1 also plays a role in inorganic carbon-concentration. This is NAD(P)H-quinone oxidoreductase subunit J from Nostoc sp. (strain PCC 7120 / SAG 25.82 / UTEX 2576).